The chain runs to 260 residues: Isopentenyl phosphate kinase (260 aa).

6–10 (KLGGS) provides a ligand contact to ATP. Gly-55 contributes to the substrate binding site. Gly-56 contributes to the ATP binding site. 2 residues coordinate substrate: His-60 and Gly-159. Residues Asp-180, Gly-217, and Lys-221 each contribute to the ATP site.

This sequence belongs to the isopentenyl phosphate kinase family. Homodimer.

The catalysed reaction is isopentenyl phosphate + ATP = isopentenyl diphosphate + ADP. In terms of biological role, catalyzes the formation of isopentenyl diphosphate (IPP), the building block of all isoprenoids. Has no activity with farnesyl phosphate. The protein is Isopentenyl phosphate kinase of Methanocaldococcus jannaschii (strain ATCC 43067 / DSM 2661 / JAL-1 / JCM 10045 / NBRC 100440) (Methanococcus jannaschii).